Here is a 430-residue protein sequence, read N- to C-terminus: Asparagine--tRNA ligase (430 aa).

The protein belongs to the class-II aminoacyl-tRNA synthetase family. Homodimer.

The protein localises to the cytoplasm. It catalyses the reaction tRNA(Asn) + L-asparagine + ATP = L-asparaginyl-tRNA(Asn) + AMP + diphosphate + H(+). In Oceanobacillus iheyensis (strain DSM 14371 / CIP 107618 / JCM 11309 / KCTC 3954 / HTE831), this protein is Asparagine--tRNA ligase.